The primary structure comprises 175 residues: Thermoresistant gluconokinase (175 aa).

15–22 provides a ligand contact to ATP; that stretch reads GVSGSGKS.

The protein belongs to the gluconokinase GntK/GntV family.

The enzyme catalyses D-gluconate + ATP = 6-phospho-D-gluconate + ADP + H(+). It functions in the pathway carbohydrate acid metabolism; D-gluconate degradation. This is Thermoresistant gluconokinase (gntK) from Escherichia coli (strain K12).